Reading from the N-terminus, the 847-residue chain is Protein IRS1 (847 aa).

3 disordered regions span residues 1-82 (MAQR…NFWH), 607-627 (WLMEQPPPPSRQTKPDAATMP), and 715-847 (QVIP…HVHH). Over residues 16-25 (RGRGAGGPSG) the composition is skewed to gly residues. A compositionally biased stretch (low complexity) spans 26–56 (VGSSPPSSCVPMGATSTAGTGASAAPTATPG). Acidic residues predominate over residues 723-733 (EPEDDDEDPTY). A compositionally biased stretch (basic residues) spans 833-847 (RPKKCQTHAPHHVHH).

The protein belongs to the herpesviridae US22 family. As to quaternary structure, interacts (via N-terminus) with the viral DNA polymerase accessory subunit UL44. Interacts (via C-terminus) with host EIF2AK2.

Its subcellular location is the virion. It localises to the host cytoplasm. It is found in the host nucleus. Functionally, acts as a transactivator along with IE2, and is required for oriLyt-dependent DNA replication in the transient transfection replication assay using native promoters. The protein is Protein IRS1 (IRS1) of Human cytomegalovirus (strain Merlin) (HHV-5).